Consider the following 213-residue polypeptide: Protein Syd (213 aa).

The protein belongs to the Syd family.

It localises to the cell inner membrane. Its function is as follows. Interacts with the SecY protein in vivo. May bind preferentially to an uncomplexed state of SecY, thus functioning either as a chelating agent for excess SecY in the cell or as a regulatory factor that negatively controls the translocase function. This is Protein Syd from Shewanella pealeana (strain ATCC 700345 / ANG-SQ1).